A 759-amino-acid polypeptide reads, in one-letter code: NADP-dependent malic enzyme (759 aa).

The interval 1–428 is malic enzyme; sequence MDEQLKQSAL…KLTEFVYKTN (428 aa). Catalysis depends on Tyr-39, which acts as the Proton donor. Lys-94 serves as the catalytic Proton acceptor. A divalent metal cation-binding residues include Glu-136, Asp-137, and Asp-162. Residues 195-198, Asn-288, and Asn-320 each bind NADP(+); that span reads AGAA. Positions 429 to 759 are phosphate acetyltransferase; that stretch reads LFMKPIFSQA…AVVEAQTTPL (331 aa).

In the N-terminal section; belongs to the malic enzymes family. It in the C-terminal section; belongs to the phosphate acetyltransferase and butyryltransferase family. Mg(2+) is required as a cofactor. Mn(2+) serves as cofactor.

It catalyses the reaction (S)-malate + NADP(+) = pyruvate + CO2 + NADPH. The enzyme catalyses oxaloacetate + H(+) = pyruvate + CO2. This Salmonella typhimurium (strain LT2 / SGSC1412 / ATCC 700720) protein is NADP-dependent malic enzyme (maeB).